The sequence spans 356 residues: Arginine kinase 1 (356 aa).

The 86-residue stretch at 6–91 (VLAKLEEGYA…FDPIIEDYHG (86 aa)) folds into the Phosphagen kinase N-terminal domain. 64–68 (GVGIY) is a binding site for substrate. The Phosphagen kinase C-terminal domain occupies 119 to 356 (YVISTRVRCG…TELIKLEKSL (238 aa)). ATP-binding positions include 122-126 (STRVR) and H185. Position 225 (E225) interacts with substrate. R229 contributes to the ATP binding site. C271 provides a ligand contact to substrate. ATP contacts are provided by residues 280-284 (RASVH) and 309-314 (RGTRGE). E314 is a binding site for substrate.

The protein belongs to the ATP:guanido phosphotransferase family.

The enzyme catalyses L-arginine + ATP = N(omega)-phospho-L-arginine + ADP + H(+). The chain is Arginine kinase 1 from Drosophila melanogaster (Fruit fly).